Here is a 453-residue protein sequence, read N- to C-terminus: Allantoinase (453 aa).

Zn(2+) is bound by residues histidine 59, histidine 61, lysine 146, histidine 186, histidine 242, and aspartate 315. Lysine 146 carries the post-translational modification N6-carboxylysine.

This sequence belongs to the metallo-dependent hydrolases superfamily. Allantoinase family. Homotetramer. The cofactor is Zn(2+). Post-translationally, carboxylation allows a single lysine to coordinate two zinc ions.

It catalyses the reaction (S)-allantoin + H2O = allantoate + H(+). The protein operates within nitrogen metabolism; (S)-allantoin degradation; allantoate from (S)-allantoin: step 1/1. Its function is as follows. Catalyzes the conversion of allantoin (5-ureidohydantoin) to allantoic acid by hydrolytic cleavage of the five-member hydantoin ring. The sequence is that of Allantoinase from Escherichia coli O127:H6 (strain E2348/69 / EPEC).